The sequence spans 448 residues: Probable D-serine dehydratase (448 aa).

Lys119 is subject to N6-(pyridoxal phosphate)lysine.

This sequence belongs to the serine/threonine dehydratase family. DsdA subfamily. It depends on pyridoxal 5'-phosphate as a cofactor.

The catalysed reaction is D-serine = pyruvate + NH4(+). The chain is Probable D-serine dehydratase from Pseudomonas paraeruginosa (strain DSM 24068 / PA7) (Pseudomonas aeruginosa (strain PA7)).